A 621-amino-acid chain; its full sequence is DNA mismatch repair protein MutL (621 aa).

The protein belongs to the DNA mismatch repair MutL/HexB family.

Functionally, this protein is involved in the repair of mismatches in DNA. It is required for dam-dependent methyl-directed DNA mismatch repair. May act as a 'molecular matchmaker', a protein that promotes the formation of a stable complex between two or more DNA-binding proteins in an ATP-dependent manner without itself being part of a final effector complex. This is DNA mismatch repair protein MutL from Petrotoga mobilis (strain DSM 10674 / SJ95).